Consider the following 107-residue polypeptide: Small ribosomal subunit protein uS17 (107 aa).

The protein belongs to the universal ribosomal protein uS17 family. Part of the 30S ribosomal subunit.

In terms of biological role, one of the primary rRNA binding proteins, it binds specifically to the 5'-end of 16S ribosomal RNA. In Thermotoga maritima (strain ATCC 43589 / DSM 3109 / JCM 10099 / NBRC 100826 / MSB8), this protein is Small ribosomal subunit protein uS17.